A 309-amino-acid polypeptide reads, in one-letter code: Olfactory receptor 8A1 (309 aa).

Topologically, residues 1–28 (MTAENQSTVTEFILGGLTNRPELQLPLF) are extracellular. The helical transmembrane segment at 29–49 (LLFLGIYVVTMVGNLGMITLI) threads the bilayer. The Cytoplasmic segment spans residues 50–56 (GLNSQLH). The chain crosses the membrane as a helical span at residues 57–77 (TPMYFFLSNLSLVDLCYSSVI). Over 78-90 (TPKMLINFVSQRN) the chain is Extracellular. A helical transmembrane segment spans residues 91-111 (LISYVGCMSQLYFFLVFVIAE). A disulfide bond links cysteine 97 and cysteine 188. At 112 to 133 (CYMLTVMAYDRYVAICQPLLYN) the chain is on the cytoplasmic side. A helical transmembrane segment spans residues 134-154 (IIMSPALCSLLVAFVYAVGLI). Topologically, residues 155–195 (GSAIETGLMLKLNYCEDLISHYFCDILPLMKLSCSSTYDVE) are extracellular. Residues 196 to 216 (MAVFFLAGFDIIVTSLTVLIS) form a helical membrane-spanning segment. At 217-238 (YAFILSSILRISSNEGRSKAFS) the chain is on the cytoplasmic side. A helical transmembrane segment spans residues 239–259 (TCSSHFAAVGLFYGSTAFMYL). Residues 260–270 (KPSTASSLAQE) lie on the Extracellular side of the membrane. A helical membrane pass occupies residues 271-291 (NVASVFYTTVIPMFNPLIYSL). Residues 292-309 (RNKEVKTALDKTLRRKVF) are Cytoplasmic-facing.

Belongs to the G-protein coupled receptor 1 family.

It localises to the cell membrane. Functionally, odorant receptor. This Mus musculus (Mouse) protein is Olfactory receptor 8A1.